We begin with the raw amino-acid sequence, 320 residues long: MSKSESPKEPEQLRKLFIGGLSFETTDESLRSHFEQWGTLTDCVVMRDPNTKRSRGFGFVTYATVEEVDAAMNARPHKVDGRVVEPKRAVSREDSQRPDAHLTVKKIFVGGIKEDTEEHHLRDYFEQYGKIEVIEIMTDRGSGKKRGFAFVTFDDHDSVDKIVIQKYHTVNGHNCEVRKALSKQEMASASSSQRGRSGSGNFGGGRGGGFGGNDNFGRGGNFSGRGGFGGSRGGGGYGGSGDGYNGFGNDGSNFGGGGSYNDFGNYNNQSSNFGPMKGGNFEGRSSGPHGGGGQYFAKPRNQGGYGGSSSSSSYGSGRRF.

RRM domains lie at 14–97 (RKLF…DSQR) and 105–184 (KKIF…LSKQ). Disordered regions lie at residues 182–218 (SKQE…NFGR) and 271–320 (SNFG…GRRF). Positions 197 to 218 (SGSGNFGGGRGGGFGGNDNFGR) are enriched in gly residues. Over residues 308-320 (SSSSSSYGSGRRF) the composition is skewed to low complexity.

This is Heterogeneous nuclear ribonucleoprotein A1-like 3 from Homo sapiens (Human).